Here is a 152-residue protein sequence, read N- to C-terminus: Holo-[acyl-carrier-protein] synthase (152 aa).

Residues Asp7 and Glu60 each coordinate Mg(2+).

This sequence belongs to the P-Pant transferase superfamily. AcpS family. Mg(2+) is required as a cofactor.

Its subcellular location is the cytoplasm. It catalyses the reaction apo-[ACP] + CoA = holo-[ACP] + adenosine 3',5'-bisphosphate + H(+). Functionally, transfers the 4'-phosphopantetheine moiety from coenzyme A to a Ser of acyl-carrier-protein. This chain is Holo-[acyl-carrier-protein] synthase, found in Bifidobacterium adolescentis (strain ATCC 15703 / DSM 20083 / NCTC 11814 / E194a).